An 806-amino-acid polypeptide reads, in one-letter code: Glycerol-3-phosphate acyltransferase (806 aa).

Positions 305 to 310 (CHRSHM) match the HXXXXD motif motif.

The protein belongs to the GPAT/DAPAT family.

The protein resides in the cell inner membrane. The enzyme catalyses sn-glycerol 3-phosphate + an acyl-CoA = a 1-acyl-sn-glycero-3-phosphate + CoA. Its pathway is phospholipid metabolism; CDP-diacylglycerol biosynthesis; CDP-diacylglycerol from sn-glycerol 3-phosphate: step 1/3. This chain is Glycerol-3-phosphate acyltransferase, found in Enterobacter sp. (strain 638).